Consider the following 678-residue polypeptide: NADPH--cytochrome P450 reductase (678 aa).

G2 is subject to N-acetylglycine. The Lumenal segment spans residues 2–22 (GDSNVDTGTTTSEMVAEEVSL). A helical membrane pass occupies residues 23–43 (FSATDMVLFSLIVGLLTYWFI). Residues 44 to 678 (FRKKKDEVPE…KGRYSLDVWS (635 aa)) are Cytoplasmic-facing. S63 carries the post-translational modification Phosphoserine. A Flavodoxin-like domain is found at 80 to 224 (IIVFYGSQTG…DFITWREQFW (145 aa)). FMN contacts are provided by residues 86 to 91 (SQTGTA), 138 to 141 (ATYG), 173 to 182 (LGNKTYEHFN), and D208. The region spanning 279–521 (KNPFLAVVTT…FVRKSQFRLP (243 aa)) is the FAD-binding FR-type domain. Residue R298 participates in NADP(+) binding. FAD contacts are provided by residues R424, 454-457 (RYYS), 472-474 (CAV), Y478, and 488-491 (GVAT). Residues T535, 596-597 (SR), 602-606 (KVYVQ), and D639 each bind NADP(+). W677 is a binding site for FAD.

The protein belongs to the NADPH--cytochrome P450 reductase family. It in the N-terminal section; belongs to the flavodoxin family. In the C-terminal section; belongs to the flavoprotein pyridine nucleotide cytochrome reductase family. Requires FAD as cofactor. It depends on FMN as a cofactor.

It localises to the endoplasmic reticulum membrane. It catalyses the reaction 2 oxidized [cytochrome P450] + NADPH = 2 reduced [cytochrome P450] + NADP(+) + H(+). Functionally, this enzyme is required for electron transfer from NADP to cytochrome P450 in microsomes. It can also provide electron transfer to heme oxygenase and cytochrome B5. The sequence is that of NADPH--cytochrome P450 reductase from Sus scrofa (Pig).